A 392-amino-acid polypeptide reads, in one-letter code: MDLFGDLPEPERPPRPSAGKEAQEGPVLFEDLPPTSSTDSGSGGPLLFDGLPPAGSGNSGSLATSGSQVVKNEGKGAKRKAPEEEKNGGEELVEKKVCKASSVIFGLKGYVAERKGEREEMQDAHVILNDITQECNPPSSLITRVSYFAVFDGHGGIRASKFAAQNLHQNLIRKFPKGDVISVEKTVKRCLLDTFKHTDEEFLKQASSQKPAWKDGSTATCVLAVDNILYIANLGDSRAILCRYNEESQKHAALSLSKEHNPTQYEERMRIQKAGGNVRDGRVLGVLEVSRSIGDGQYKRCGVTSVPDIRRCQLTPNDRFILLACDGLFKVFTPEEAVNFILSCLEDEKIQTREGKPAVDARYEAACNRLANKAVQRGSADNVTVMVVRIGH.

M1 is subject to N-acetylmethionine. Residues 1-91 are disordered; the sequence is MDLFGDLPEP…PEEEKNGGEE (91 aa). Low complexity predominate over residues 31 to 40; sequence DLPPTSSTDS. Residues 59–70 show a composition bias toward polar residues; it reads SGSLATSGSQVV. Over residues 72–91 the composition is skewed to basic and acidic residues; that stretch reads NEGKGAKRKAPEEEKNGGEE. The 283-residue stretch at 108–390 folds into the PPM-type phosphatase domain; sequence KGYVAERKGE…DNVTVMVVRI (283 aa). Mn(2+) contacts are provided by D152 and G153. At K210 the chain carries N6-acetyllysine. The Mn(2+) site is built by D326 and D381.

This sequence belongs to the PP2C family. In terms of assembly, interacts with ILK. Mg(2+) is required as a cofactor. Mn(2+) serves as cofactor. Widely expressed. Highest expression observed in kidney, liver and muscle.

It is found in the cytoplasm. The catalysed reaction is O-phospho-L-seryl-[protein] + H2O = L-seryl-[protein] + phosphate. The enzyme catalyses O-phospho-L-threonyl-[protein] + H2O = L-threonyl-[protein] + phosphate. In terms of biological role, protein phosphatase that may play a role in regulation of cell cycle progression via dephosphorylation of its substrates whose appropriate phosphorylation states might be crucial for cell proliferation. Selectively associates with integrin linked kinase (ILK), to modulate cell adhesion and growth factor signaling. Inhibits the ILK-GSK3B signaling axis and may play an important role in inhibiting oncogenic transformation. The sequence is that of Integrin-linked kinase-associated serine/threonine phosphatase 2C (Ilkap) from Rattus norvegicus (Rat).